A 300-amino-acid chain; its full sequence is tRNA dimethylallyltransferase (300 aa).

11 to 18 (GPTAVGKS) serves as a coordination point for ATP. Position 13–18 (13–18 (TAVGKS)) interacts with substrate. The interaction with substrate tRNA stretch occupies residues 35 to 38 (DSIQ).

Belongs to the IPP transferase family. In terms of assembly, monomer. Requires Mg(2+) as cofactor.

It carries out the reaction adenosine(37) in tRNA + dimethylallyl diphosphate = N(6)-dimethylallyladenosine(37) in tRNA + diphosphate. Catalyzes the transfer of a dimethylallyl group onto the adenine at position 37 in tRNAs that read codons beginning with uridine, leading to the formation of N6-(dimethylallyl)adenosine (i(6)A). This chain is tRNA dimethylallyltransferase, found in Borreliella afzelii (strain PKo) (Borrelia afzelii).